Here is a 485-residue protein sequence, read N- to C-terminus: Acetyl-coenzyme A carboxylase carboxyl transferase subunit beta, chloroplastic (485 aa).

One can recognise a CoA carboxyltransferase N-terminal domain in the interval 218–485 (LWIQCDNCYA…FFPLNKNEIK (268 aa)). Cys-222, Cys-225, Cys-241, and Cys-244 together coordinate Zn(2+). The C4-type zinc finger occupies 222–244 (CDNCYALIYKKALKFKMNVCEQC).

This sequence belongs to the AccD/PCCB family. As to quaternary structure, acetyl-CoA carboxylase is a heterohexamer composed of biotin carboxyl carrier protein, biotin carboxylase and 2 subunits each of ACCase subunit alpha and ACCase plastid-coded subunit beta (accD). Zn(2+) is required as a cofactor.

Its subcellular location is the plastid. It localises to the chloroplast stroma. The enzyme catalyses N(6)-carboxybiotinyl-L-lysyl-[protein] + acetyl-CoA = N(6)-biotinyl-L-lysyl-[protein] + malonyl-CoA. It participates in lipid metabolism; malonyl-CoA biosynthesis; malonyl-CoA from acetyl-CoA: step 1/1. In terms of biological role, component of the acetyl coenzyme A carboxylase (ACC) complex. Biotin carboxylase (BC) catalyzes the carboxylation of biotin on its carrier protein (BCCP) and then the CO(2) group is transferred by the transcarboxylase to acetyl-CoA to form malonyl-CoA. The chain is Acetyl-coenzyme A carboxylase carboxyl transferase subunit beta, chloroplastic from Aethionema cordifolium (Lebanon stonecress).